The following is an 865-amino-acid chain: Fanconi-associated nuclease 1 homolog (865 aa).

The UBZ4-type zinc finger occupies glycine 35–aspartate 62. Positions 38, 41, 53, and 57 each coordinate Zn(2+). Disordered regions lie at residues aspartate 90 to valine 140 and arginine 162 to lysine 187. Basic and acidic residues-rich tracts occupy residues phenylalanine 93–proline 112 and aspartate 174–lysine 187. Residues glutamate 682, aspartate 810, glutamate 825, and valine 826 each coordinate Mn(2+). The VRR-NUC domain maps to glutamine 744 to alanine 857.

The protein belongs to the FAN1 family. It depends on Mn(2+) as a cofactor. Mg(2+) serves as cofactor.

It localises to the nucleus. It carries out the reaction Hydrolytically removes 5'-nucleotides successively from the 3'-hydroxy termini of 3'-hydroxy-terminated oligonucleotides.. Its function is as follows. Nuclease required for the repair of DNA interstrand cross-links (ICL). Acts as a 5'-3' exonuclease that anchors at a cut end of DNA and cleaves DNA successively at every third nucleotide, allowing to excise an ICL from one strand through flanking incisions. In Caenorhabditis elegans, this protein is Fanconi-associated nuclease 1 homolog (fan-1).